Reading from the N-terminus, the 508-residue chain is Ankyrin repeat domain-containing protein 34B (508 aa).

ANK repeat units lie at residues 9–38 (TDGN…YINE), 42–79 (RGET…DPNI), 83–113 (SGKS…DLSL), and 117–146 (SGYS…AKGK). A disordered region spans residues 157 to 185 (PSGRHTTQHHLNMPPADMDGSHPPATPSE). The residue at position 260 (Ser260) is a Phosphoserine. Thr269 carries the phosphothreonine modification. Phosphoserine is present on Ser293. The span at 361 to 370 (GANHYSSDSQ) shows a compositional bias: polar residues. Residues 361–380 (GANHYSSDSQLAEGVTPPTV) are disordered.

Belongs to the ANKRD34 family. Phosphorylated. As to expression, specifically and constitutively expressed in brain (at protein level).

It is found in the cytoplasm. The protein localises to the nucleus. The sequence is that of Ankyrin repeat domain-containing protein 34B (Ankrd34b) from Mus musculus (Mouse).